A 290-amino-acid chain; its full sequence is Small ribosomal subunit biogenesis GTPase RsgA (290 aa).

The region spanning 62 to 219 (DNYLIRPQVA…VVDTPGFSTL (158 aa)) is the CP-type G domain. GTP-binding positions include 111–114 (NKID) and 162–170 (GPSGVGKST). 4 residues coordinate Zn(2+): Cys243, Cys248, His250, and Cys256.

Belongs to the TRAFAC class YlqF/YawG GTPase family. RsgA subfamily. Monomer. Associates with 30S ribosomal subunit, binds 16S rRNA. Zn(2+) is required as a cofactor.

The protein localises to the cytoplasm. Its function is as follows. One of several proteins that assist in the late maturation steps of the functional core of the 30S ribosomal subunit. Helps release RbfA from mature subunits. May play a role in the assembly of ribosomal proteins into the subunit. Circularly permuted GTPase that catalyzes slow GTP hydrolysis, GTPase activity is stimulated by the 30S ribosomal subunit. This chain is Small ribosomal subunit biogenesis GTPase RsgA, found in Clostridium novyi (strain NT).